The chain runs to 214 residues: Ribosomal protein uL16-like (214 aa).

Belongs to the universal ribosomal protein uL16 family. As to quaternary structure, component of a male germ cell-specific 60S large ribosomal subunit (LSU), which contains RPL10L and RPL39L, instead of RPL10 and RPL39 paralogs. The composition of the rest of the complex is similar to classical ribosomes. As to expression, almost testis-specific. Also expressed in pre- and postmenopausal ovary.

Its subcellular location is the cytoplasm. Functionally, testis-specific component of the ribosome, which is required for the transition from prophase to metaphase in male meiosis I. Compensates for the inactivated X-linked RPL10 paralog during spermatogenesis. The ribosome is a large ribonucleoprotein complex responsible for the synthesis of proteins in the cell. The male germ cell-specific ribosome displays a ribosomal polypeptide exit tunnel of distinct size and charge states compared with the classical ribosome. It is responsible for regulating the biosynthesis and folding of a subset of male germ-cell-specific proteins that are essential for the formation of sperm. The polypeptide is Ribosomal protein uL16-like (Homo sapiens (Human)).